A 338-amino-acid chain; its full sequence is Ferredoxin--NADP reductase (338 aa).

The FAD site is built by D32, Q40, Y45, V85, F120, D287, and T327.

It belongs to the ferredoxin--NADP reductase type 2 family. As to quaternary structure, homodimer. It depends on FAD as a cofactor.

The catalysed reaction is 2 reduced [2Fe-2S]-[ferredoxin] + NADP(+) + H(+) = 2 oxidized [2Fe-2S]-[ferredoxin] + NADPH. The chain is Ferredoxin--NADP reductase from Wolbachia pipientis wMel.